Here is a 60-residue protein sequence, read N- to C-terminus: MAVPRRKTSPSRRGMRRSADAIKRPTYVEDKDSGELRRPHHLDLKTGMYKGRQVLKKKDS.

Basic residues predominate over residues 1–16; sequence MAVPRRKTSPSRRGMR. A disordered region spans residues 1–60; it reads MAVPRRKTSPSRRGMRRSADAIKRPTYVEDKDSGELRRPHHLDLKTGMYKGRQVLKKKDS. A compositionally biased stretch (basic and acidic residues) spans 17–44; that stretch reads RSADAIKRPTYVEDKDSGELRRPHHLDL.

The polypeptide is Large ribosomal subunit protein bL32 (Rhodopseudomonas palustris (strain ATCC BAA-98 / CGA009)).